Here is a 219-residue protein sequence, read N- to C-terminus: ATP-dependent dethiobiotin synthetase BioD (219 aa).

Residue 14–19 (DVGKTY) coordinates ATP. Thr-18 is a Mg(2+) binding site. The active site involves Lys-37. Ser-41 lines the substrate pocket. Residues Asp-54, 114 to 117 (EGAG), and 175 to 176 (NN) contribute to the ATP site. Mg(2+)-binding residues include Asp-54 and Glu-114.

This sequence belongs to the dethiobiotin synthetase family. As to quaternary structure, homodimer. It depends on Mg(2+) as a cofactor.

The protein localises to the cytoplasm. The enzyme catalyses (7R,8S)-7,8-diammoniononanoate + CO2 + ATP = (4R,5S)-dethiobiotin + ADP + phosphate + 3 H(+). It functions in the pathway cofactor biosynthesis; biotin biosynthesis; biotin from 7,8-diaminononanoate: step 1/2. Its function is as follows. Catalyzes a mechanistically unusual reaction, the ATP-dependent insertion of CO2 between the N7 and N8 nitrogen atoms of 7,8-diaminopelargonic acid (DAPA, also called 7,8-diammoniononanoate) to form a ureido ring. The protein is ATP-dependent dethiobiotin synthetase BioD of Fusobacterium nucleatum subsp. nucleatum (strain ATCC 25586 / DSM 15643 / BCRC 10681 / CIP 101130 / JCM 8532 / KCTC 2640 / LMG 13131 / VPI 4355).